Here is a 670-residue protein sequence, read N- to C-terminus: UvrABC system protein B (670 aa).

One can recognise a Helicase ATP-binding domain in the interval 26–183 (EGLEDGLAHQ…RRLAELQYSR (158 aa)). 39-46 (GVTGSGKT) contacts ATP. The Beta-hairpin motif lies at 92 to 115 (YYDYYQPEAYVPSSDTFIEKDASV). A Helicase C-terminal domain is found at 431–597 (QVDDLLSEIR…GLNKKISDIL (167 aa)). Positions 630-665 (ELKIRELESKMLTHAQNLEFEEAAALRDELQALRAQ) constitute a UVR domain.

It belongs to the UvrB family. As to quaternary structure, forms a heterotetramer with UvrA during the search for lesions. Interacts with UvrC in an incision complex.

The protein localises to the cytoplasm. Functionally, the UvrABC repair system catalyzes the recognition and processing of DNA lesions. A damage recognition complex composed of 2 UvrA and 2 UvrB subunits scans DNA for abnormalities. Upon binding of the UvrA(2)B(2) complex to a putative damaged site, the DNA wraps around one UvrB monomer. DNA wrap is dependent on ATP binding by UvrB and probably causes local melting of the DNA helix, facilitating insertion of UvrB beta-hairpin between the DNA strands. Then UvrB probes one DNA strand for the presence of a lesion. If a lesion is found the UvrA subunits dissociate and the UvrB-DNA preincision complex is formed. This complex is subsequently bound by UvrC and the second UvrB is released. If no lesion is found, the DNA wraps around the other UvrB subunit that will check the other stand for damage. This chain is UvrABC system protein B, found in Pectobacterium carotovorum subsp. carotovorum (strain PC1).